Reading from the N-terminus, the 557-residue chain is Dihydroxy-acid dehydratase (557 aa).

Residue D78 coordinates Mg(2+). C119 is a [2Fe-2S] cluster binding site. Mg(2+) contacts are provided by D120 and K121. K121 is subject to N6-carboxylysine. A [2Fe-2S] cluster-binding site is contributed by C192. Residue E442 coordinates Mg(2+). Residue S468 is the Proton acceptor of the active site.

It belongs to the IlvD/Edd family. As to quaternary structure, homodimer. Requires [2Fe-2S] cluster as cofactor. Mg(2+) is required as a cofactor.

It catalyses the reaction (2R)-2,3-dihydroxy-3-methylbutanoate = 3-methyl-2-oxobutanoate + H2O. It carries out the reaction (2R,3R)-2,3-dihydroxy-3-methylpentanoate = (S)-3-methyl-2-oxopentanoate + H2O. It participates in amino-acid biosynthesis; L-isoleucine biosynthesis; L-isoleucine from 2-oxobutanoate: step 3/4. The protein operates within amino-acid biosynthesis; L-valine biosynthesis; L-valine from pyruvate: step 3/4. Functionally, functions in the biosynthesis of branched-chain amino acids. Catalyzes the dehydration of (2R,3R)-2,3-dihydroxy-3-methylpentanoate (2,3-dihydroxy-3-methylvalerate) into 2-oxo-3-methylpentanoate (2-oxo-3-methylvalerate) and of (2R)-2,3-dihydroxy-3-methylbutanoate (2,3-dihydroxyisovalerate) into 2-oxo-3-methylbutanoate (2-oxoisovalerate), the penultimate precursor to L-isoleucine and L-valine, respectively. The sequence is that of Dihydroxy-acid dehydratase from Bacillus cereus (strain Q1).